We begin with the raw amino-acid sequence, 1145 residues long: Error-prone DNA polymerase (1145 aa).

This sequence belongs to the DNA polymerase type-C family. DnaE2 subfamily.

It is found in the cytoplasm. The catalysed reaction is DNA(n) + a 2'-deoxyribonucleoside 5'-triphosphate = DNA(n+1) + diphosphate. Its function is as follows. DNA polymerase involved in damage-induced mutagenesis and translesion synthesis (TLS). It is not the major replicative DNA polymerase. The polypeptide is Error-prone DNA polymerase (Rhodopirellula baltica (strain DSM 10527 / NCIMB 13988 / SH1)).